Consider the following 1242-residue polypeptide: Protein jagged-1a (1242 aa).

Residues 1–28 form the signal peptide; it reads MILRPSATFAALSAHVLLRCLWMRVCEA. Residues 29-1070 lie on the Extracellular side of the membrane; it reads SGHFEMQVLS…KQPQNPNVDY (1042 aa). Asn-141 carries an N-linked (GlcNAc...) asparagine glycan. The DSL domain maps to 186 to 230; the sequence is VTCDEHYFGFGCNKFCRPRDDFFGHYTCDHNGNKTCLEGWAGPEC. 2 cysteine pairs are disulfide-bonded: Cys-188/Cys-197 and Cys-201/Cys-213. N-linked (GlcNAc...) asparagine glycosylation occurs at Asn-218. Disulfide bonds link Cys-221–Cys-230, Cys-235–Cys-246, Cys-239–Cys-252, Cys-254–Cys-263, Cys-266–Cys-277, Cys-272–Cys-283, Cys-285–Cys-294, Cys-301–Cys-313, Cys-307–Cys-323, Cys-325–Cys-334, Cys-341–Cys-352, Cys-346–Cys-361, Cys-363–Cys-372, Cys-379–Cys-390, Cys-384–Cys-399, Cys-401–Cys-410, Cys-417–Cys-428, Cys-422–Cys-437, Cys-439–Cys-448, Cys-455–Cys-465, Cys-459–Cys-474, Cys-476–Cys-485, Cys-492–Cys-503, Cys-497–Cys-512, Cys-514–Cys-523, Cys-530–Cys-541, Cys-535–Cys-550, Cys-552–Cys-561, Cys-600–Cys-618, Cys-620–Cys-629, Cys-636–Cys-647, Cys-641–Cys-656, Cys-658–Cys-667, Cys-674–Cys-685, Cys-679–Cys-694, Cys-696–Cys-705, Cys-712–Cys-723, Cys-717–Cys-732, and Cys-734–Cys-743. Residues 231–264 form the EGF-like 1 domain; it reads NTAICKQGCSIEHGSCKVPGNCRCLYGWQGEYCD. The 31-residue stretch at 265 to 295 folds into the EGF-like 2; atypical domain; it reads QCIPHPGCVHGTCIEPWQCLCDTNWGGQLCD. EGF-like domains lie at 297-335 and 337-373; these read DLNT…QNCE and ADNA…PSCN. Positions 375-411 constitute an EGF-like 5; calcium-binding domain; it reads NEDDCSPNPCNHSGVCVDLVDGFKCICPVQWTGKTCL. N-linked (GlcNAc...) asparagine glycosylation occurs at Asn-385. An EGF-like 6; calcium-binding domain is found at 413 to 449; it reads DANECEESPCVNAHSCRNLIGGYFCECLPGWTGQNCD. An EGF-like 7; calcium-binding domain is found at 451-486; that stretch reads NVNDCHGQCLNGGLCKDLVNGYRCVCAAGFAGDRCE. The region spanning 488-524 is the EGF-like 8; calcium-binding domain; that stretch reads DVDECASRPCLNGGRCQDTLNGFQCLCPPGFSGATCQ. 2 consecutive EGF-like domains span residues 526 to 562 and 575 to 630; these read DLDY…KNCS and VIDS…TYCH. Asn-560 carries N-linked (GlcNAc...) asparagine glycosylation. The EGF-like 11; calcium-binding domain maps to 632–668; that stretch reads NINDCESSPCLSGGTCIDKINAYQCICADGWEGPNCE. The region spanning 670–706 is the EGF-like 12; calcium-binding domain; sequence NIDDCRTNPCRDRGVCRDLVNDFYCECENGWKGKTCH. EGF-like domains are found at residues 708 to 744 and 747 to 783; these read RESQ…ATCN and KNSS…PTCS. A glycan (N-linked (GlcNAc...) asparagine) is linked at Asn-748. 9 disulfide bridges follow: Cys-751–Cys-762, Cys-756–Cys-771, Cys-773–Cys-782, Cys-789–Cys-800, Cys-794–Cys-809, Cys-811–Cys-820, Cys-827–Cys-838, Cys-832–Cys-847, and Cys-849–Cys-858. The EGF-like 15; calcium-binding domain maps to 785–821; that stretch reads NSNDCNPQPCYNSGTCVDGDNWYRCECASGFAGPDCR. One can recognise an EGF-like 16; calcium-binding domain in the interval 823-859; it reads NINECQSSPCAFGSTCVDEINGYRCLCPPGRTGPRCQ. The region spanning 917-959 is the EGF-like 17 domain; sequence TGQLCVPVRDEQCFVKPCSSQGECWSAHRPAVRTHCQPDSHCA. Residues Asn-960, Asn-991, and Asn-1046 are each glycosylated (N-linked (GlcNAc...) asparagine). Residues 1071–1095 form a helical membrane-spanning segment; the sequence is MVPLLVSVVTAIWVLALASVFLWCI. The Cytoplasmic portion of the chain corresponds to 1096-1242; the sequence is RHHRKQSSSA…HSLQKMEYIV (147 aa). Positions 1191–1242 are disordered; that stretch reads RDDRLSSNGTDIKKHPQWTNKRDNRDLESQHRVPDSQHRDSQHSLQKMEYIV. Positions 1210–1232 are enriched in basic and acidic residues; it reads NKRDNRDLESQHRVPDSQHRDSQ.

It is found in the membrane. Its subcellular location is the cell membrane. Functionally, ligand for multiple Notch receptors and involved in the mediation of Notch signaling. Seems to be involved in cell-fate decisions. In Danio rerio (Zebrafish), this protein is Protein jagged-1a (jag1a).